The primary structure comprises 214 residues: STS14 protein (214 aa).

A signal peptide spans 1–19 (MFVLSTAMACLVYIYIYIY). 3 consecutive repeat copies span residues 13 to 14 (YI), 15 to 16 (YI), and 17 to 18 (YI). A 3 X 2 AA tandem repeats of Y-I region spans residues 13–18 (YIYIYI). Residues 80-200 (LDAHNKARSE…YEGPATLTVC (121 aa)) form the SCP domain.

The protein belongs to the CRISP family. Highly expressed in the stigma and stylar cortex throughout pistil development. Not expressed in other organs.

May protect the outer tissues of the pistil from pathogen attack. In Solanum tuberosum (Potato), this protein is STS14 protein (STS14).